Consider the following 193-residue polypeptide: uncharacterized protein (193 aa).

The tract at residues 55 to 94 (PVGGAAGARSLSQALPAPAPPPPPPPGLGPSSERPWPSPW) is disordered. The segment covering 71–82 (APAPPPPPPPGL) has biased composition (pro residues).

This is an uncharacterized protein from Homo sapiens (Human).